The sequence spans 193 residues: ATP synthase subunit delta (193 aa).

Belongs to the ATPase delta chain family. In terms of assembly, F-type ATPases have 2 components, F(1) - the catalytic core - and F(0) - the membrane proton channel. F(1) has five subunits: alpha(3), beta(3), gamma(1), delta(1), epsilon(1). F(0) has three main subunits: a(1), b(2) and c(10-14). The alpha and beta chains form an alternating ring which encloses part of the gamma chain. F(1) is attached to F(0) by a central stalk formed by the gamma and epsilon chains, while a peripheral stalk is formed by the delta and b chains.

Its subcellular location is the cell inner membrane. Its function is as follows. F(1)F(0) ATP synthase produces ATP from ADP in the presence of a proton or sodium gradient. F-type ATPases consist of two structural domains, F(1) containing the extramembraneous catalytic core and F(0) containing the membrane proton channel, linked together by a central stalk and a peripheral stalk. During catalysis, ATP synthesis in the catalytic domain of F(1) is coupled via a rotary mechanism of the central stalk subunits to proton translocation. Functionally, this protein is part of the stalk that links CF(0) to CF(1). It either transmits conformational changes from CF(0) to CF(1) or is implicated in proton conduction. The chain is ATP synthase subunit delta from Allorhizobium ampelinum (strain ATCC BAA-846 / DSM 112012 / S4) (Agrobacterium vitis (strain S4)).